The sequence spans 166 residues: Phosphopantetheine adenylyltransferase (166 aa).

Threonine 14 contributes to the substrate binding site. Residues 14 to 15 (TF) and histidine 22 each bind ATP. Substrate contacts are provided by lysine 46, leucine 78, and arginine 92. ATP is bound by residues 93 to 95 (GLR), glutamate 103, and 128 to 134 (WMYLSSS).

Belongs to the bacterial CoaD family. Homohexamer. Mg(2+) serves as cofactor.

The protein localises to the cytoplasm. The enzyme catalyses (R)-4'-phosphopantetheine + ATP + H(+) = 3'-dephospho-CoA + diphosphate. It functions in the pathway cofactor biosynthesis; coenzyme A biosynthesis; CoA from (R)-pantothenate: step 4/5. In terms of biological role, reversibly transfers an adenylyl group from ATP to 4'-phosphopantetheine, yielding dephospho-CoA (dPCoA) and pyrophosphate. This Maridesulfovibrio salexigens (strain ATCC 14822 / DSM 2638 / NCIMB 8403 / VKM B-1763) (Desulfovibrio salexigens) protein is Phosphopantetheine adenylyltransferase.